The sequence spans 540 residues: Pentatricopeptide repeat-containing protein At3g29290 (540 aa).

PPR repeat units lie at residues 106–140, 141–175, 177–205, 213–247, 248–282, 283–317, 318–352, 353–387, 389–423, 424–458, 459–487, and 489–523; these read NEETLSKRLRKLSRLDKVRSALELFDSMRFLGLQP, NAHACNSFLSCLLRNGDIQKAFTVFEFMRKKENVT, HTYSLMLKAVAEVKGCESALRMFRELERE, DVVLYNTAISLCGRINNVYETERIWRVMKGDGHIG, TEITYSLLVSIFVRCGRSELALDVYDEMVNNKISL, REDAMYAMISACTKEEKWDLALKIFQSMLKKGMKP, NLVACNTLINSLGKAGKVGLVFKVYSVLKSLGHKP, DEYTWNALLTALYKANRYEDVLQLFDMIRSENLCC, NEYLYNTAMVSCQKLGYWEKAVKLLYEMEGSGLTV, STSSYNLVISACEKSRKSKVALLVYEHMAQRDCKP, NTFTYLSLVRSCIWGSLWDEVEDILKKVE, and DVSLYNAAIHGMCLRREFKFAKELYVKMREMGLEP.

This sequence belongs to the PPR family. P subfamily.

The protein is Pentatricopeptide repeat-containing protein At3g29290 (EMB2076) of Arabidopsis thaliana (Mouse-ear cress).